A 52-amino-acid chain; its full sequence is Large ribosomal subunit protein bL32c (52 aa).

It belongs to the bacterial ribosomal protein bL32 family.

The protein resides in the plastid. It localises to the chloroplast. The protein is Large ribosomal subunit protein bL32c of Arabis hirsuta (Hairy rock-cress).